The following is an 800-amino-acid chain: Phenylalanine--tRNA ligase beta subunit (800 aa).

The 114-residue stretch at 39-152 folds into the tRNA-binding domain; sequence AAGLSKIVVG…EDAVPGEEVF (114 aa). Positions 405–480 constitute a B5 domain; that stretch reads TSDVEVSSTL…RIYGYDRLPT (76 aa). Mg(2+) contacts are provided by aspartate 458, aspartate 464, glutamate 467, and glutamate 468. The FDX-ACB domain maps to 707–800; the sequence is TKFPAVSRDV…LEEKVNAEVR (94 aa).

The protein belongs to the phenylalanyl-tRNA synthetase beta subunit family. Type 1 subfamily. Tetramer of two alpha and two beta subunits. Requires Mg(2+) as cofactor.

Its subcellular location is the cytoplasm. It catalyses the reaction tRNA(Phe) + L-phenylalanine + ATP = L-phenylalanyl-tRNA(Phe) + AMP + diphosphate + H(+). This chain is Phenylalanine--tRNA ligase beta subunit, found in Streptococcus pneumoniae (strain ATCC BAA-255 / R6).